Here is a 142-residue protein sequence, read N- to C-terminus: Large ribosomal subunit protein uL13 (142 aa).

This sequence belongs to the universal ribosomal protein uL13 family. In terms of assembly, part of the 50S ribosomal subunit.

Its function is as follows. This protein is one of the early assembly proteins of the 50S ribosomal subunit, although it is not seen to bind rRNA by itself. It is important during the early stages of 50S assembly. The protein is Large ribosomal subunit protein uL13 of Acidovorax sp. (strain JS42).